The following is a 314-amino-acid chain: Methionyl-tRNA formyltransferase (314 aa).

Position 113–116 (113–116) interacts with (6S)-5,6,7,8-tetrahydrofolate; that stretch reads SLLP.

Belongs to the Fmt family.

It carries out the reaction L-methionyl-tRNA(fMet) + (6R)-10-formyltetrahydrofolate = N-formyl-L-methionyl-tRNA(fMet) + (6S)-5,6,7,8-tetrahydrofolate + H(+). Functionally, attaches a formyl group to the free amino group of methionyl-tRNA(fMet). The formyl group appears to play a dual role in the initiator identity of N-formylmethionyl-tRNA by promoting its recognition by IF2 and preventing the misappropriation of this tRNA by the elongation apparatus. This chain is Methionyl-tRNA formyltransferase, found in Pseudomonas syringae pv. tomato (strain ATCC BAA-871 / DC3000).